A 61-amino-acid chain; its full sequence is MAKKSMIAKAARKPKFAVRGYTRCQICGRPHSVYKDFGICRVCLRKMANEGLIPGLKKASW.

4 residues coordinate Zn(2+): cysteine 24, cysteine 27, cysteine 40, and cysteine 43.

The protein belongs to the universal ribosomal protein uS14 family. Zinc-binding uS14 subfamily. In terms of assembly, part of the 30S ribosomal subunit. Contacts proteins S3 and S10. The cofactor is Zn(2+).

In terms of biological role, binds 16S rRNA, required for the assembly of 30S particles and may also be responsible for determining the conformation of the 16S rRNA at the A site. The sequence is that of Small ribosomal subunit protein uS14 from Campylobacter concisus (strain 13826).